Consider the following 219-residue polypeptide: Large ribosomal subunit protein uL3 (219 aa).

The disordered stretch occupies residues 136 to 156 (GASHGAHRNHRKPGSIGGCAT).

Belongs to the universal ribosomal protein uL3 family. As to quaternary structure, part of the 50S ribosomal subunit. Forms a cluster with proteins L14 and L19.

Functionally, one of the primary rRNA binding proteins, it binds directly near the 3'-end of the 23S rRNA, where it nucleates assembly of the 50S subunit. In Kineococcus radiotolerans (strain ATCC BAA-149 / DSM 14245 / SRS30216), this protein is Large ribosomal subunit protein uL3.